We begin with the raw amino-acid sequence, 185 residues long: Ribosome-recycling factor (185 aa).

It belongs to the RRF family.

It localises to the cytoplasm. Its function is as follows. Responsible for the release of ribosomes from messenger RNA at the termination of protein biosynthesis. May increase the efficiency of translation by recycling ribosomes from one round of translation to another. In Alteromonas mediterranea (strain DSM 17117 / CIP 110805 / LMG 28347 / Deep ecotype), this protein is Ribosome-recycling factor.